We begin with the raw amino-acid sequence, 342 residues long: S-adenosylmethionine:tRNA ribosyltransferase-isomerase (342 aa).

This sequence belongs to the QueA family. In terms of assembly, monomer.

The protein localises to the cytoplasm. The enzyme catalyses 7-aminomethyl-7-carbaguanosine(34) in tRNA + S-adenosyl-L-methionine = epoxyqueuosine(34) in tRNA + adenine + L-methionine + 2 H(+). It participates in tRNA modification; tRNA-queuosine biosynthesis. Functionally, transfers and isomerizes the ribose moiety from AdoMet to the 7-aminomethyl group of 7-deazaguanine (preQ1-tRNA) to give epoxyqueuosine (oQ-tRNA). The sequence is that of S-adenosylmethionine:tRNA ribosyltransferase-isomerase from Listeria monocytogenes serovar 1/2a (strain ATCC BAA-679 / EGD-e).